Consider the following 400-residue polypeptide: 3-phenylpropionate/cinnamic acid dioxygenase ferredoxin--NAD(+) reductase component (400 aa).

Threonine 5–aspartate 36 contacts FAD. Serine 146–glutamate 174 is an NAD(+) binding site.

It belongs to the bacterial ring-hydroxylating dioxygenase ferredoxin reductase family. As to quaternary structure, this dioxygenase system consists of four proteins: the two subunits of the hydroxylase component (HcaE and HcaF), a ferredoxin (HcaC) and a ferredoxin reductase (HcaD). Requires FAD as cofactor.

The enzyme catalyses 2 reduced [2Fe-2S]-[ferredoxin] + NAD(+) + H(+) = 2 oxidized [2Fe-2S]-[ferredoxin] + NADH. It functions in the pathway aromatic compound metabolism; 3-phenylpropanoate degradation. Part of the multicomponent 3-phenylpropionate dioxygenase, that converts 3-phenylpropionic acid (PP) and cinnamic acid (CI) into 3-phenylpropionate-dihydrodiol (PP-dihydrodiol) and cinnamic acid-dihydrodiol (CI-dihydrodiol), respectively. This chain is 3-phenylpropionate/cinnamic acid dioxygenase ferredoxin--NAD(+) reductase component, found in Escherichia coli O7:K1 (strain IAI39 / ExPEC).